Here is a 696-residue protein sequence, read N- to C-terminus: Polyribonucleotide nucleotidyltransferase (696 aa).

Mg(2+) contacts are provided by Asp-483 and Asp-489. A KH domain is found at 550–609 (PRITTIWVKVDKIRDVIGSGGKNIRSVTEATGVSIDIDDTGKINIASTNKEACDLAIKMI). In terms of domain architecture, S1 motif spans 619 to 687 (GKLYMGTVKK…KQGKIKLSRK (69 aa)).

The protein belongs to the polyribonucleotide nucleotidyltransferase family. Mg(2+) serves as cofactor.

It localises to the cytoplasm. The enzyme catalyses RNA(n+1) + phosphate = RNA(n) + a ribonucleoside 5'-diphosphate. Involved in mRNA degradation. Catalyzes the phosphorolysis of single-stranded polyribonucleotides processively in the 3'- to 5'-direction. The polypeptide is Polyribonucleotide nucleotidyltransferase (Geobacter sp. (strain M21)).